The chain runs to 638 residues: Phosphomethylpyrimidine synthase (638 aa).

Substrate contacts are provided by residues N236, M265, Y294, H330, 350 to 352, 391 to 394, and E430; these read SRG and DGLR. Residue H434 coordinates Zn(2+). Y457 is a binding site for substrate. H498 contacts Zn(2+). [4Fe-4S] cluster contacts are provided by C578, C581, and C586. Over residues 608-624 the composition is skewed to low complexity; sequence AEGASQQEAEQGMQEMS. The tract at residues 608 to 633 is disordered; sequence AEGASQQEAEQGMQEMSQKYKDAGRR.

Belongs to the ThiC family. Homodimer. The cofactor is [4Fe-4S] cluster.

It carries out the reaction 5-amino-1-(5-phospho-beta-D-ribosyl)imidazole + S-adenosyl-L-methionine = 4-amino-2-methyl-5-(phosphooxymethyl)pyrimidine + CO + 5'-deoxyadenosine + formate + L-methionine + 3 H(+). It participates in cofactor biosynthesis; thiamine diphosphate biosynthesis. In terms of biological role, catalyzes the synthesis of the hydroxymethylpyrimidine phosphate (HMP-P) moiety of thiamine from aminoimidazole ribotide (AIR) in a radical S-adenosyl-L-methionine (SAM)-dependent reaction. This Hahella chejuensis (strain KCTC 2396) protein is Phosphomethylpyrimidine synthase.